A 242-amino-acid polypeptide reads, in one-letter code: Probable 2-phosphosulfolactate phosphatase (242 aa).

Belongs to the ComB family. The cofactor is Mg(2+).

It carries out the reaction (2R)-O-phospho-3-sulfolactate + H2O = (2R)-3-sulfolactate + phosphate. The protein is Probable 2-phosphosulfolactate phosphatase of Parasynechococcus marenigrum (strain WH8102).